The sequence spans 186 residues: Peptidyl-tRNA hydrolase (186 aa).

Tyrosine 16 serves as a coordination point for tRNA. The active-site Proton acceptor is the histidine 21. Positions 66, 68, and 114 each coordinate tRNA.

This sequence belongs to the PTH family. As to quaternary structure, monomer.

The protein resides in the cytoplasm. The enzyme catalyses an N-acyl-L-alpha-aminoacyl-tRNA + H2O = an N-acyl-L-amino acid + a tRNA + H(+). Its function is as follows. Hydrolyzes ribosome-free peptidyl-tRNAs (with 1 or more amino acids incorporated), which drop off the ribosome during protein synthesis, or as a result of ribosome stalling. In terms of biological role, catalyzes the release of premature peptidyl moieties from peptidyl-tRNA molecules trapped in stalled 50S ribosomal subunits, and thus maintains levels of free tRNAs and 50S ribosomes. In Ureaplasma parvum serovar 3 (strain ATCC 700970), this protein is Peptidyl-tRNA hydrolase.